Reading from the N-terminus, the 327-residue chain is Deoxynucleotidyltransferase terminal-interacting protein 1 (327 aa).

The span at 1–11 (MGATGDTGGPR) shows a compositional bias: gly residues. 2 disordered regions span residues 1-34 (MGAT…PVLT) and 146-172 (KRGR…LPGH). The tract at residues 55–146 (MTTSFTDPAI…RLAHELPGIK (92 aa)) is important for dimerization. Basic and acidic residues predominate over residues 146 to 161 (KRGRQAEEESHREAPF). Positions 157–171 (REAPFPKRGKVGLPG) form a DNA-binding region, a.T hook. A Nuclear localization signal motif is present at residues 162–168 (PKRGKVG). Residues 195 to 314 (REGPKWDPAR…MRKYMETLRT (120 aa)) are important for DNA and nucleosome binding. Positions 214-235 (GSRANKALGMGGTRGRIYIKHP) form a DNA-binding region, H-T-H motif.

As to quaternary structure, monomer and homodimer. A minor proportion may form homotrimers. Interacts with ZNF541. Interacts with the terminal deoxynucleotidyltransferase DNTT. Interacts with TRERF1. Identified in a histone deacetylase complex that contains DNTTIP1, HDAC1 and MIDEAS; this complex assembles into a tetramer that contains four copies of each protein chain. Component of a histone deacetylase complex containing DNTTIP1, ZNF541, HDAC1 and HDAC2. Identified in a complex with KCTD19, HDAC1, HDAC2 and ZNF541. In terms of tissue distribution, expressed in thymus, bone marrow and spleen.

The protein localises to the nucleus. In terms of biological role, increases DNTT terminal deoxynucleotidyltransferase activity (in vitro). Also acts as a transcriptional regulator, binding to the consensus sequence 5'-GNTGCATG-3' following an AT-tract. Associates with RAB20 promoter and positively regulates its transcription. Binds DNA and nucleosomes; may recruit HDAC1 complexes to nucleosomes or naked DNA. This Rattus norvegicus (Rat) protein is Deoxynucleotidyltransferase terminal-interacting protein 1 (Dnttip1).